We begin with the raw amino-acid sequence, 116 residues long: uncharacterized protein (116 aa).

3 helical membrane-spanning segments follow: residues 8-28 (FMIY…VSFA), 39-59 (GLLL…NPPF), and 75-95 (FLLI…YLMV).

To M.jannaschii MJ1580.

It is found in the cell membrane. This is an uncharacterized protein from Methanothermobacter thermautotrophicus (strain ATCC 29096 / DSM 1053 / JCM 10044 / NBRC 100330 / Delta H) (Methanobacterium thermoautotrophicum).